A 475-amino-acid polypeptide reads, in one-letter code: Cytosolic non-specific dipeptidase (475 aa).

At alanine 2 the chain carries N-acetylalanine. Lysine 9 is modified (N6-acetyllysine). Serine 58 carries the phosphoserine modification. Mn(2+) is bound at residue histidine 99. The active site involves aspartate 101. Mn(2+) is bound at residue aspartate 132. The Proton acceptor role is filled by glutamate 166. Residues glutamate 166 to glutamate 167, aspartate 195, and histidine 228 each bind substrate. Mn(2+) is bound by residues glutamate 167 and aspartate 195. Serine 299 carries the phosphoserine modification. Residues threonine 330, arginine 343, serine 417, and histidine 445 each contribute to the substrate site. Histidine 445 is a binding site for Mn(2+).

Belongs to the peptidase M20A family. Homodimer. It depends on Mn(2+) as a cofactor.

It localises to the cytoplasm. The enzyme catalyses Hydrolysis of dipeptides, preferentially hydrophobic dipeptides including prolyl amino acids.. It catalyses the reaction L-threonyl-L-threonine + H2O = 2 L-threonine. It carries out the reaction L-threonyl-L-serine + H2O = L-threonine + L-serine. The catalysed reaction is L-seryl-L-threonine + H2O = L-threonine + L-serine. The enzyme catalyses L-cysteinylglycine + H2O = L-cysteine + glycine. It catalyses the reaction (S)-lactate + L-phenylalanine = N-[(S)-lactoyl]-L-phenylalanine + H2O. Catalyzes the peptide bond hydrolysis in dipeptides, displaying a non-redundant activity toward threonyl dipeptides. Mediates threonyl dipeptide catabolism in a tissue-specific way. Has high dipeptidase activity toward cysteinylglycine, an intermediate metabolite in glutathione metabolism. Metabolizes N-lactoyl-amino acids, both through hydrolysis to form lactic acid and amino acids, as well as through their formation by reverse proteolysis. Plays a role in the regulation of cell cycle arrest and apoptosis. The polypeptide is Cytosolic non-specific dipeptidase (CNDP2) (Pongo abelii (Sumatran orangutan)).